Reading from the N-terminus, the 415-residue chain is Imidazolonepropionase (415 aa).

Histidine 75 and histidine 77 together coordinate Fe(3+). Positions 75 and 77 each coordinate Zn(2+). 3 residues coordinate 4-imidazolone-5-propanoate: arginine 84, tyrosine 147, and histidine 180. Residue tyrosine 147 coordinates N-formimidoyl-L-glutamate. A Fe(3+)-binding site is contributed by histidine 245. Histidine 245 is a Zn(2+) binding site. Glutamine 248 lines the 4-imidazolone-5-propanoate pocket. Aspartate 320 lines the Fe(3+) pocket. Residue aspartate 320 coordinates Zn(2+). N-formimidoyl-L-glutamate is bound by residues asparagine 322 and glycine 324. Threonine 325 contacts 4-imidazolone-5-propanoate.

It belongs to the metallo-dependent hydrolases superfamily. HutI family. Requires Zn(2+) as cofactor. Fe(3+) serves as cofactor.

The protein localises to the cytoplasm. It catalyses the reaction 4-imidazolone-5-propanoate + H2O = N-formimidoyl-L-glutamate. It participates in amino-acid degradation; L-histidine degradation into L-glutamate; N-formimidoyl-L-glutamate from L-histidine: step 3/3. In terms of biological role, catalyzes the hydrolytic cleavage of the carbon-nitrogen bond in imidazolone-5-propanoate to yield N-formimidoyl-L-glutamate. It is the third step in the universal histidine degradation pathway. The chain is Imidazolonepropionase from Photorhabdus laumondii subsp. laumondii (strain DSM 15139 / CIP 105565 / TT01) (Photorhabdus luminescens subsp. laumondii).